Consider the following 1050-residue polypeptide: uncharacterized protein (1050 aa).

Coiled-coil stretches lie at residues 1-420 (MEKV…TAKM), 463-627 (YSLL…IREL), and 692-981 (NDSK…NLLS).

This is an uncharacterized protein from Arabidopsis thaliana (Mouse-ear cress).